Consider the following 494-residue polypeptide: Glycerol kinase (494 aa).

T13 lines the ADP pocket. 3 residues coordinate ATP: T13, T14, and S15. Position 13 (T13) interacts with sn-glycerol 3-phosphate. Position 17 (R17) interacts with ADP. Sn-glycerol 3-phosphate contacts are provided by R83, E84, Y135, and D244. Glycerol is bound by residues R83, E84, Y135, D244, and Q245. ADP is bound by residues T266 and G309. T266, G309, Q313, and G410 together coordinate ATP. G410 and N414 together coordinate ADP.

This sequence belongs to the FGGY kinase family.

The enzyme catalyses glycerol + ATP = sn-glycerol 3-phosphate + ADP + H(+). It participates in polyol metabolism; glycerol degradation via glycerol kinase pathway; sn-glycerol 3-phosphate from glycerol: step 1/1. Its activity is regulated as follows. Inhibited by fructose 1,6-bisphosphate (FBP). Key enzyme in the regulation of glycerol uptake and metabolism. Catalyzes the phosphorylation of glycerol to yield sn-glycerol 3-phosphate. This is Glycerol kinase from Shewanella sp. (strain MR-7).